Here is a 393-residue protein sequence, read N- to C-terminus: Beta-1,4-galactosyltransferase 3 (393 aa).

Residues 1–10 (MLRRLLERPC) lie on the Cytoplasmic side of the membrane. A helical; Signal-anchor for type II membrane protein transmembrane segment spans residues 11–31 (TLALLVGSQLAVMMYLSLGGF). At 32 to 393 (RSLSALFGRD…ANHTALRGSH (362 aa)) the chain is on the lumenal side. Asparagine 57 carries N-linked (GlcNAc...) asparagine glycosylation. A disulfide bridge connects residues cysteine 77 and cysteine 119. 130 to 134 (PHRAR) lines the UDP-alpha-D-galactose pocket. An N-linked (GlcNAc...) asparagine glycan is attached at asparagine 166. UDP-alpha-D-galactose-binding positions include 169–171 (FNR), 196–197 (VD), tyrosine 226, and tryptophan 258. A disulfide bond links cysteine 190 and cysteine 209. Mn(2+) is bound at residue aspartate 197. N-acetyl-D-glucosamine is bound at residue 260 to 263 (GEDD). Histidine 291 lines the Mn(2+) pocket. 291–293 (HRG) is a binding site for UDP-alpha-D-galactose. Arginine 303 contacts N-acetyl-D-glucosamine. 2 N-linked (GlcNAc...) asparagine glycosylation sites follow: asparagine 337 and asparagine 385. The tract at residues 339 to 393 (TADIGTDPRGPRAPSGPRYPPGSSQAFRQEMLQRRPPARPGPPPTANHTALRGSH) is disordered.

The protein belongs to the glycosyltransferase 7 family. Requires Mn(2+) as cofactor.

The protein localises to the golgi apparatus. It is found in the golgi stack membrane. The enzyme catalyses an N-acetyl-beta-D-glucosaminyl derivative + UDP-alpha-D-galactose = a beta-D-galactosyl-(1-&gt;4)-N-acetyl-beta-D-glucosaminyl derivative + UDP + H(+). It carries out the reaction N-acetyl-D-glucosamine + UDP-alpha-D-galactose = beta-D-galactosyl-(1-&gt;4)-N-acetyl-D-glucosamine + UDP + H(+). The catalysed reaction is a beta-D-GlcNAc-(1-&gt;3)-beta-D-Gal-(1-&gt;4)-beta-D-Glc-(1&lt;-&gt;1)-Cer(d18:1(4E)) + UDP-alpha-D-galactose = a neolactoside nLc4Cer(d18:1(4E)) + UDP + H(+). It catalyses the reaction a beta-D-glucosylceramide + UDP-alpha-D-galactose = a beta-D-galactosyl-(1-&gt;4)-beta-D-glucosyl-(1&lt;-&gt;1)-ceramide + UDP + H(+). The enzyme catalyses a neolactoside IV(3)-beta-GlcNAc-nLc4Cer + UDP-alpha-D-galactose = a neolactoside nLc6Cer + UDP + H(+). The protein operates within protein modification; protein glycosylation. Responsible for the synthesis of complex-type N-linked oligosaccharides in many glycoproteins as well as the carbohydrate moieties of glycolipids. This Pongo abelii (Sumatran orangutan) protein is Beta-1,4-galactosyltransferase 3 (B4GALT3).